Reading from the N-terminus, the 281-residue chain is Aspartate/glutamate leucyltransferase (281 aa).

Belongs to the R-transferase family. Bpt subfamily.

Its subcellular location is the cytoplasm. It catalyses the reaction N-terminal L-glutamyl-[protein] + L-leucyl-tRNA(Leu) = N-terminal L-leucyl-L-glutamyl-[protein] + tRNA(Leu) + H(+). The catalysed reaction is N-terminal L-aspartyl-[protein] + L-leucyl-tRNA(Leu) = N-terminal L-leucyl-L-aspartyl-[protein] + tRNA(Leu) + H(+). Functionally, functions in the N-end rule pathway of protein degradation where it conjugates Leu from its aminoacyl-tRNA to the N-termini of proteins containing an N-terminal aspartate or glutamate. This Paracoccus denitrificans (strain Pd 1222) protein is Aspartate/glutamate leucyltransferase.